The following is a 51-amino-acid chain: MRDKIKLVSSAGTGFYYTTDKNKRNMPGKMEIKKFDPKVRQHVLFKEAKIK.

This sequence belongs to the bacterial ribosomal protein bL33 family.

The polypeptide is Large ribosomal subunit protein bL33 (Pseudoalteromonas atlantica (strain T6c / ATCC BAA-1087)).